The sequence spans 346 residues: 4-hydroxy-2-oxovalerate aldolase (346 aa).

A Pyruvate carboxyltransferase domain is found at 8–260 (VTVHDMTLRD…ETGVDVFKIQ (253 aa)). 16–17 (RD) lines the substrate pocket. Residue Asp-17 coordinates Mn(2+). His-20 serves as the catalytic Proton acceptor. 2 residues coordinate substrate: Ser-170 and His-199. Mn(2+) is bound by residues His-199 and His-201. Tyr-290 is a substrate binding site.

It belongs to the 4-hydroxy-2-oxovalerate aldolase family.

It carries out the reaction (S)-4-hydroxy-2-oxopentanoate = acetaldehyde + pyruvate. The chain is 4-hydroxy-2-oxovalerate aldolase from Polaromonas naphthalenivorans (strain CJ2).